The sequence spans 233 residues: Thymidylate kinase (233 aa).

Residue 10–17 participates in ATP binding; the sequence is GVDGVGKT.

The protein belongs to the thymidylate kinase family.

It catalyses the reaction dTMP + ATP = dTDP + ADP. In terms of biological role, phosphorylation of dTMP to form dTDP in both de novo and salvage pathways of dTTP synthesis. The polypeptide is Thymidylate kinase (Bifidobacterium longum subsp. infantis (strain ATCC 15697 / DSM 20088 / JCM 1222 / NCTC 11817 / S12)).